A 65-amino-acid chain; its full sequence is Small ribosomal subunit protein bS21 (65 aa).

This sequence belongs to the bacterial ribosomal protein bS21 family.

This chain is Small ribosomal subunit protein bS21, found in Chlorobaculum parvum (strain DSM 263 / NCIMB 8327) (Chlorobium vibrioforme subsp. thiosulfatophilum).